A 176-amino-acid polypeptide reads, in one-letter code: NAD(P)H-quinone oxidoreductase subunit 6, chloroplastic (176 aa).

5 helical membrane passes run I10–T30, I33–L53, V60–F80, I95–I115, and F152–T172.

This sequence belongs to the complex I subunit 6 family. NDH is composed of at least 16 different subunits, 5 of which are encoded in the nucleus.

Its subcellular location is the plastid. It is found in the chloroplast thylakoid membrane. It catalyses the reaction a plastoquinone + NADH + (n+1) H(+)(in) = a plastoquinol + NAD(+) + n H(+)(out). The enzyme catalyses a plastoquinone + NADPH + (n+1) H(+)(in) = a plastoquinol + NADP(+) + n H(+)(out). Its function is as follows. NDH shuttles electrons from NAD(P)H:plastoquinone, via FMN and iron-sulfur (Fe-S) centers, to quinones in the photosynthetic chain and possibly in a chloroplast respiratory chain. The immediate electron acceptor for the enzyme in this species is believed to be plastoquinone. Couples the redox reaction to proton translocation, and thus conserves the redox energy in a proton gradient. The chain is NAD(P)H-quinone oxidoreductase subunit 6, chloroplastic (ndhG) from Zea mays (Maize).